Consider the following 174-residue polypeptide: Shikimate kinase (174 aa).

G14–T19 is an ATP binding site. S18 is a binding site for Mg(2+). The substrate site is built by D36, R60, and G82. An ATP-binding site is contributed by R120. R139 provides a ligand contact to substrate. Q156 is an ATP binding site.

The protein belongs to the shikimate kinase family. Monomer. Requires Mg(2+) as cofactor.

The protein resides in the cytoplasm. It carries out the reaction shikimate + ATP = 3-phosphoshikimate + ADP + H(+). It participates in metabolic intermediate biosynthesis; chorismate biosynthesis; chorismate from D-erythrose 4-phosphate and phosphoenolpyruvate: step 5/7. Catalyzes the specific phosphorylation of the 3-hydroxyl group of shikimic acid using ATP as a cosubstrate. This Vibrio cholerae serotype O1 (strain ATCC 39541 / Classical Ogawa 395 / O395) protein is Shikimate kinase.